The sequence spans 1052 residues: Eukaryotic translation initiation factor 3 subunit A (1052 aa).

The stretch at 92-121 forms a coiled coil; the sequence is LKKFIELAEKKVTEAQAKADEIQSSLESAA. Residues 339 to 523 form the PCI domain; sequence MTKAASFVLL…GVLTFDTDVF (185 aa). Positions 580-906 form a coiled coil; sequence EARLQAKRAA…AEARRAARRT (327 aa). Composition is skewed to basic and acidic residues over residues 617–632 and 794–901; these read AATD…EETR and KEVS…EARR. Disordered stretches follow at residues 617-646 and 794-1052; these read AATD…AEKQ and KEVS…QGGQ. 2 stretches are compositionally biased toward low complexity: residues 905 to 927 and 948 to 964; these read RTGG…TAPR and KEAA…AAPE. Positions 1013–1028 are enriched in polar residues; that stretch reads GSSQPPSRTQTPGSSS.

It belongs to the eIF-3 subunit A family. In terms of assembly, component of the eukaryotic translation initiation factor 3 (eIF-3) complex.

The protein resides in the cytoplasm. In terms of biological role, RNA-binding component of the eukaryotic translation initiation factor 3 (eIF-3) complex, which is involved in protein synthesis of a specialized repertoire of mRNAs and, together with other initiation factors, stimulates binding of mRNA and methionyl-tRNAi to the 40S ribosome. The eIF-3 complex specifically targets and initiates translation of a subset of mRNAs involved in cell proliferation. The sequence is that of Eukaryotic translation initiation factor 3 subunit A (tif32) from Aspergillus niger (strain ATCC MYA-4892 / CBS 513.88 / FGSC A1513).